Here is a 212-residue protein sequence, read N- to C-terminus: Peptide methionine sulfoxide reductase MsrA (212 aa).

Cysteine 52 is a catalytic residue.

The protein belongs to the MsrA Met sulfoxide reductase family.

The enzyme catalyses L-methionyl-[protein] + [thioredoxin]-disulfide + H2O = L-methionyl-(S)-S-oxide-[protein] + [thioredoxin]-dithiol. It catalyses the reaction [thioredoxin]-disulfide + L-methionine + H2O = L-methionine (S)-S-oxide + [thioredoxin]-dithiol. In terms of biological role, has an important function as a repair enzyme for proteins that have been inactivated by oxidation. Catalyzes the reversible oxidation-reduction of methionine sulfoxide in proteins to methionine. The sequence is that of Peptide methionine sulfoxide reductase MsrA from Yersinia enterocolitica serotype O:8 / biotype 1B (strain NCTC 13174 / 8081).